Here is a 188-residue protein sequence, read N- to C-terminus: Putative glutamine amidotransferase-like protein YvdE homolog (188 aa).

One can recognise a Glutamine amidotransferase type-1 domain in the interval 17 to 188; it reads SPFWWNKVSY…IKDLGQGLQA (172 aa).

The polypeptide is Putative glutamine amidotransferase-like protein YvdE homolog (Lactococcus lactis subsp. cremoris (Streptococcus cremoris)).